The primary structure comprises 459 residues: tRNA modification GTPase MnmE (459 aa).

Residues Arg20, Glu85, and Arg124 each coordinate (6S)-5-formyl-5,6,7,8-tetrahydrofolate. Residues 221 to 380 (GLSTVIIGRP…LEEAIQSLFY (160 aa)) form the TrmE-type G domain. Asn231 contributes to the K(+) binding site. GTP-binding positions include 231–236 (NVGKSS), 250–256 (TDIPGTT), and 275–278 (DTAG). Ser235 serves as a coordination point for Mg(2+). Positions 250, 252, and 255 each coordinate K(+). Residue Thr256 participates in Mg(2+) binding. Lys459 is a binding site for (6S)-5-formyl-5,6,7,8-tetrahydrofolate.

It belongs to the TRAFAC class TrmE-Era-EngA-EngB-Septin-like GTPase superfamily. TrmE GTPase family. In terms of assembly, homodimer. Heterotetramer of two MnmE and two MnmG subunits. It depends on K(+) as a cofactor.

The protein localises to the cytoplasm. Its function is as follows. Exhibits a very high intrinsic GTPase hydrolysis rate. Involved in the addition of a carboxymethylaminomethyl (cmnm) group at the wobble position (U34) of certain tRNAs, forming tRNA-cmnm(5)s(2)U34. In Bacillus velezensis (strain DSM 23117 / BGSC 10A6 / LMG 26770 / FZB42) (Bacillus amyloliquefaciens subsp. plantarum), this protein is tRNA modification GTPase MnmE.